The sequence spans 137 residues: Large ribosomal subunit protein uL16 (137 aa).

It belongs to the universal ribosomal protein uL16 family. Part of the 50S ribosomal subunit.

Binds 23S rRNA and is also seen to make contacts with the A and possibly P site tRNAs. In Wolbachia sp. subsp. Brugia malayi (strain TRS), this protein is Large ribosomal subunit protein uL16.